Here is a 333-residue protein sequence, read N- to C-terminus: Coiled-coil domain-containing protein 68 (333 aa).

Coiled-coil stretches lie at residues 86–120 (LDLLMENMRRKDQQLLEMNRENEVLQIKLEASREA) and 160–302 (EKEQ…HWTE).

As to quaternary structure, interacts with CEP170.

It is found in the cytoplasm. It localises to the cytoskeleton. The protein resides in the microtubule organizing center. The protein localises to the centrosome. Its subcellular location is the centriole. In terms of biological role, centriolar protein required for centriole subdistal appendage assembly and microtubule anchoring in interphase cells. Together with CCDC120, cooperate with subdistal appendage components ODF2, NIN and CEP170 for hierarchical subdistal appendage assembly. This is Coiled-coil domain-containing protein 68 (Ccdc68) from Mus musculus (Mouse).